The primary structure comprises 122 residues: Large ribosomal subunit protein uL14 (122 aa).

It belongs to the universal ribosomal protein uL14 family. As to quaternary structure, part of the 50S ribosomal subunit. Forms a cluster with proteins L3 and L19. In the 70S ribosome, L14 and L19 interact and together make contacts with the 16S rRNA in bridges B5 and B8.

In terms of biological role, binds to 23S rRNA. Forms part of two intersubunit bridges in the 70S ribosome. In Carsonella ruddii (strain PV), this protein is Large ribosomal subunit protein uL14.